A 734-amino-acid chain; its full sequence is Cytoplasmic polyadenylation element-binding protein 3 (734 aa).

Disordered stretches follow at residues 1–31 (MDRNDDSAPVQAAAEPAEHPGDEKSGKRNVP), 98–185 (GSKK…AARN), and 220–283 (RGSL…LPPR). The span at 16-26 (PAEHPGDEKSG) shows a compositional bias: basic and acidic residues. Low complexity-rich tracts occupy residues 121-140 (SRRTTPTASASTAKTTSPSR) and 232-242 (KSFSSTTTSSS). Positions 243–256 (PEKEREKEKEKIEQ) are enriched in basic and acidic residues. A compositionally biased stretch (polar residues) spans 259 to 275 (YGTTQRQSVNSQQSSAS). One can recognise an RRM domain in the interval 294-316 (IFVGGVPWDITEAALKDSFGEFG). Disordered regions lie at residues 564 to 593 (KAYQGHASRHSHLSSNSPSKARDGQNSNNS) and 630 to 657 (TVYDGPLTPPSSETMSKRGSREFSSNSN). Residues 576–593 (LSSNSPSKARDGQNSNNS) are compositionally biased toward low complexity.

In terms of biological role, cytoplasmic polyadenylation element binding protein that binds to and regulates the translation of specific mRNAs. The protein is Cytoplasmic polyadenylation element-binding protein 3 (cpb-3) of Caenorhabditis japonica.